We begin with the raw amino-acid sequence, 258 residues long: Snake venom serine protease BPA (258 aa).

An N-terminal signal peptide occupies residues 1–18 (MVLIRVIANLLILQLSNA). A propeptide spanning residues 19-24 (QKSSEL) is cleaved from the precursor. The Peptidase S1 domain occupies 25-249 (VIGGDECNIT…YLPWIQSIIA (225 aa)). 6 disulfide bridges follow: cysteine 31–cysteine 163, cysteine 50–cysteine 66, cysteine 98–cysteine 256, cysteine 142–cysteine 210, cysteine 174–cysteine 189, and cysteine 200–cysteine 225. N-linked (GlcNAc...) asparagine glycosylation is found at asparagine 32 and asparagine 44. Histidine 65 acts as the Charge relay system in catalysis. Asparagine 103 carries N-linked (GlcNAc...) asparagine glycosylation. Aspartate 110 functions as the Charge relay system in the catalytic mechanism. A glycan (N-linked (GlcNAc...) asparagine) is linked at asparagine 121. Serine 133 carries O-linked (GalNAc...) serine glycosylation. N-linked (GlcNAc...) asparagine glycosylation is found at asparagine 154 and asparagine 170. The active-site Charge relay system is serine 204. N-linked (GlcNAc...) asparagine glycans are attached at residues asparagine 211 and asparagine 251. Threonine 255 carries an O-linked (GalNAc...) threonine glycan.

This sequence belongs to the peptidase S1 family. Snake venom subfamily. As to quaternary structure, monomer. N- and O-glycosylated. The glycosylation has a stabilizing effect on the protein. However, the removal of part of the carbohydrates enhances the proteolytic activity of the SVSP towards human and rat fibrinogen. Expressed by the venom gland.

It localises to the secreted. Inhibited by diisopropylfluorophosphate (DFP), but not by SBTI, Antithrombin III/heparin and BPTI, probably due to steric hindrance caused by its huge carbohydrate moietie. In terms of biological role, snake venom serine protease that has a potent and selective fibrinogenolytic activity. Preferentially cleaves the alpha-chain (FGA) of human and rat fibrinogen at Arg-|-Gly bonds, and slowly digests the beta-chain (FGB). In vivo, completely avoids thrombus formation induced in rat, decreases the fibrinogen plasma level and prolonges the recalcification time. Possesses esterolytic and amidolytic activities. This Bothrops jararaca (Jararaca) protein is Snake venom serine protease BPA.